Consider the following 252-residue polypeptide: Imidazole glycerol phosphate synthase subunit HisF (252 aa).

Residues aspartate 13 and aspartate 132 contribute to the active site.

This sequence belongs to the HisA/HisF family. In terms of assembly, heterodimer of HisH and HisF.

It localises to the cytoplasm. The catalysed reaction is 5-[(5-phospho-1-deoxy-D-ribulos-1-ylimino)methylamino]-1-(5-phospho-beta-D-ribosyl)imidazole-4-carboxamide + L-glutamine = D-erythro-1-(imidazol-4-yl)glycerol 3-phosphate + 5-amino-1-(5-phospho-beta-D-ribosyl)imidazole-4-carboxamide + L-glutamate + H(+). It functions in the pathway amino-acid biosynthesis; L-histidine biosynthesis; L-histidine from 5-phospho-alpha-D-ribose 1-diphosphate: step 5/9. IGPS catalyzes the conversion of PRFAR and glutamine to IGP, AICAR and glutamate. The HisF subunit catalyzes the cyclization activity that produces IGP and AICAR from PRFAR using the ammonia provided by the HisH subunit. This Campylobacter hominis (strain ATCC BAA-381 / DSM 21671 / CCUG 45161 / LMG 19568 / NCTC 13146 / CH001A) protein is Imidazole glycerol phosphate synthase subunit HisF.